A 211-amino-acid polypeptide reads, in one-letter code: HTH-type transcriptional regulator AlkX (211 aa).

The HTH tetR-type domain maps to Ala22–Leu82. Positions Thr45 to Phe64 form a DNA-binding region, H-T-H motif.

In terms of assembly, homodimer.

The protein resides in the cytoplasm. Its activity is regulated as follows. DNA-binding activity may be regulated by fatty acids. Represses the expression of the alkB-rubAB operon, which encodes the alkane hydroxylase AlkB and the rubredoxins RubA and RubB. Acts by binding to the promoter region of the operon. In addition, EMSA analysis show that AlkX can bind to the promoter region of mmpS1 and mmpL3 and to the intragenic region of mmpL11, suggesting that it may participate in the regulatory network that controls the expression of MmpL lipid transporters. This is HTH-type transcriptional regulator AlkX from Mycobacterium tuberculosis (strain ATCC 25618 / H37Rv).